Here is a 541-residue protein sequence, read N- to C-terminus: Cytochrome bc1 complex cytochrome b subunit (541 aa).

The helical transmembrane segment at 36-56 (FLLGEIALYSFIILILTGVYL) threads the bilayer. Heme is bound by residues His-105 and His-119. Transmembrane regions (helical) follow at residues 109 to 129 (ALMF…TGAF), 137 to 157 (WVIG…GYSL), and 169 to 189 (IMSA…WMIF). Positions 206 and 221 each coordinate heme. 5 helical membrane passes run 207–227 (VLII…LVWY), 256–276 (SVAF…VTTI), 325–345 (VFWV…YPWI), 371–391 (LGVM…NDIW), and 408–428 (IGLI…CIGL).

It belongs to the cytochrome b family. As to quaternary structure, the cytochrome bc1 complex is composed of a cytochrome b (QcrB), the Rieske protein iron-sulfur (QcrA) and a diheme cytochrome c (QcrC) subunit. Heme is required as a cofactor.

It localises to the cell membrane. It carries out the reaction a quinol + 2 Fe(III)-[cytochrome c](out) = a quinone + 2 Fe(II)-[cytochrome c](out) + 2 H(+)(out). Functionally, cytochrome b subunit of the cytochrome bc1 complex, an essential component of the respiratory electron transport chain required for ATP synthesis. The bc1 complex catalyzes the oxidation of menaquinol and the reduction of cytochrome c in the respiratory chain. The bc1 complex operates through a Q-cycle mechanism that couples electron transfer to generation of the proton gradient that drives ATP synthesis. The chain is Cytochrome bc1 complex cytochrome b subunit (qcrB) from Corynebacterium efficiens (strain DSM 44549 / YS-314 / AJ 12310 / JCM 11189 / NBRC 100395).